A 359-amino-acid chain; its full sequence is Heat-inducible transcription repressor HrcA (359 aa).

Belongs to the HrcA family.

Negative regulator of class I heat shock genes (grpE-dnaK-dnaJ and groELS operons). Prevents heat-shock induction of these operons. This chain is Heat-inducible transcription repressor HrcA, found in Sinorhizobium fredii (strain NBRC 101917 / NGR234).